The sequence spans 292 residues: Xanthine dehydrogenase FAD-binding subunit (292 aa).

Residues 1-176 (MFDFASYHRA…VAFHFPPQPK (176 aa)) enclose the FAD-binding PCMH-type domain. FAD-binding positions include 27–34 (KLLAGGTD), 109–113 (ATYGG), Ile-165, and Phe-184.

As to quaternary structure, heterotrimer of XdhA, XdhB and XdhC. Requires FAD as cofactor.

It catalyses the reaction xanthine + NAD(+) + H2O = urate + NADH + H(+). The catalysed reaction is hypoxanthine + NAD(+) + H2O = xanthine + NADH + H(+). It participates in purine metabolism; hypoxanthine degradation; urate from hypoxanthine: step 1/2. Its pathway is purine metabolism; hypoxanthine degradation; urate from hypoxanthine: step 2/2. Its function is as follows. Presumed to be a dehydrogenase, but possibly an oxidase. Participates in limited purine salvage (requires aspartate) but does not support aerobic growth on purines as the sole carbon source (purine catabolism). The sequence is that of Xanthine dehydrogenase FAD-binding subunit (xdhB) from Escherichia coli O157:H7.